Here is a 436-residue protein sequence, read N- to C-terminus: Adenine nucleotide transporter BT1, chloroplastic/amyloplastic/mitochondrial (436 aa).

The disordered stretch occupies residues 83-135 (ASLAPPFPGSRPPGRRGRGSEEEEAEGRRHEEAAAAGRSEPEEGQGQDRQPAP). 3 Solcar repeats span residues 132-216 (QPAP…AKKF), 227-311 (IPIP…LKRL), and 324-412 (VGPV…CKKI). A run of 6 helical transmembrane segments spans residues 137–158 (RLVSGAIAGAVSRTFVAPLETI), 193–213 (AVNVLRVAPSKAIEHFTYDTA), 229–247 (IPTPLVAGALAGFASTLCT), 290–310 (SLIGVVPYAACNFYAYETLKR), 327–347 (VATLLIGSAAGAIASSATFPL), and 384–405 (LYRGLGPSCIKLMPAAGIAFMC). Over residues 417–428 (EDEEEEDEAGGG) the composition is skewed to acidic residues. The segment at 417–436 (EDEEEEDEAGGGEDDKKKVE) is disordered.

It belongs to the mitochondrial carrier (TC 2.A.29) family. Highly expressed in silks and endosperm of developing kernels. Expressed at intermediate levels in tassels and lower levels in stems and leaves.

It is found in the plastid. It localises to the chloroplast inner membrane. Its subcellular location is the amyloplast inner membrane. The protein localises to the mitochondrion inner membrane. Inhibited by mersalyl. Functionally, probable adenylate translocator that mediates transport of ADP-glucose into endosperm storage plastids during starch synthesis. Transports cytosolic ADP-glucose to amyloplast stroma by counter-exchange with ADP. This is Adenine nucleotide transporter BT1, chloroplastic/amyloplastic/mitochondrial (BT1) from Zea mays (Maize).